Reading from the N-terminus, the 199-residue chain is Pneumococcal vaccine antigen A homolog (199 aa).

It localises to the cell surface. This chain is Pneumococcal vaccine antigen A homolog (pvaA), found in Streptococcus pyogenes serotype M3 (strain ATCC BAA-595 / MGAS315).